Here is a 1084-residue protein sequence, read N- to C-terminus: Cellulose synthase A catalytic subunit 2 [UDP-forming] (1084 aa).

Methionine 1 carries the post-translational modification N-acetylmethionine. The Cytoplasmic segment spans residues 1 to 278 (MNTGGRLIAG…RSSRINPYRM (278 aa)). Residues cysteine 39, cysteine 42, cysteine 58, cysteine 61, cysteine 66, cysteine 69, cysteine 81, and cysteine 84 each contribute to the Zn(2+) site. The RING-type; degenerate zinc finger occupies 39 to 85 (CQICGDEIELTVSSELFVACNECAFPVCRPCYEYERREGNQACPQCK). Positions 230–259 (IKHEGGNNGRGSNDDDELDDPDMPMMDEGR) are disordered. A helical membrane pass occupies residues 279–299 (LILCRLAILGLFFHYRILHPV). Residues 300–301 (ND) are Extracellular-facing. A helical transmembrane segment spans residues 302–322 (AYGLWLTSVICEIWFAVSWIL). Residues 323–867 (DQFPKWYPIE…INSVVYPWTS (545 aa)) are Cytoplasmic-facing. UDP-alpha-D-glucose contacts are provided by serine 361, lysine 367, glutamate 368, and aspartate 397. Residue aspartate 397 is part of the active site. A coiled-coil region spans residues 451–477 (VRERRAMKRDYEEFKVKINALVATAQK). Lysine 538 serves as a coordination point for UDP-alpha-D-glucose. 2 residues coordinate Mn(2+): lysine 539 and aspartate 563. Aspartate 784 is an active-site residue. A helical membrane pass occupies residues 868–888 (LPLIVYCSLPAVCLLTGKFIV). The Extracellular portion of the chain corresponds to 889 to 893 (PEISN). The chain crosses the membrane as a helical span at residues 894-914 (YAGILFMLMFISIAVTGILEM). Over 915–929 (QWGGVGIDDWWRNEQ) the chain is Cytoplasmic. A helical membrane pass occupies residues 930–950 (FWVIGGASSHLFALFQGLLKV). Residues 951 to 979 (LAGVNTNFTVTSKAADDGAFSELYIFKWT) lie on the Extracellular side of the membrane. An N-linked (GlcNAc...) asparagine glycan is attached at asparagine 957. The helical transmembrane segment at 980–1000 (TLLIPPTTLLIINIIGVIVGV) threads the bilayer. Residues 1001–1011 (SDAISNGYDSW) are Cytoplasmic-facing. A helical transmembrane segment spans residues 1012–1032 (GPLFGRLFFALWVIVHLYPFL). Residues 1033–1041 (KGMLGKQDK) are Extracellular-facing. A helical membrane pass occupies residues 1042–1062 (MPTIIVVWSILLASILTLLWV). The Cytoplasmic segment spans residues 1063 to 1084 (RVNPFVAKGGPVLEICGLNCGN).

Belongs to the glycosyltransferase 2 family. Plant cellulose synthase subfamily. In terms of assembly, homodimer. Interaction through zinc finger domain. The cofactor is Mn(2+). It depends on Zn(2+) as a cofactor. Strongly and ubiquitously expressed. Localized in some dividing and expanding cells, as well as in vascular tissues.

Its subcellular location is the cell membrane. It carries out the reaction [(1-&gt;4)-beta-D-glucosyl](n) + UDP-alpha-D-glucose = [(1-&gt;4)-beta-D-glucosyl](n+1) + UDP + H(+). It functions in the pathway glycan metabolism; plant cellulose biosynthesis. Functionally, catalytic subunit of cellulose synthase terminal complexes ('rosettes'), required for beta-1,4-glucan microfibril crystallization, a major mechanism of the cell wall formation. Involved in the primary cell wall formation. In Arabidopsis thaliana (Mouse-ear cress), this protein is Cellulose synthase A catalytic subunit 2 [UDP-forming].